Consider the following 1784-residue polypeptide: MDNENSSIFKSYQGYECWRGEKQIILKDSIGRQLPYIVNFKKNTCQIFDIEWERVTHSFVFPEGCALIDADYFPTEEGKLGILVGVEDPRQSCGAEHFVLALAVDPDSPAMTITHSLEVPSKITVVKTLFSSADMADETQRTVLKLYHRLMTWQHIVAIGCKETQCYLARLVAVETPSSPVITVHSEKKYLINLMNAYVSGSVLQYTLDDGAYREYPTAAVYISALSLMPRSRTLLVGLSMGGILAASLNPSNQMMLLELRHERLVRKIAPLEPEDDPDKFEYFIATVDCSPRHPIMIQLWRGSFKTLEDVDGEEKYDRPSFSVCLEHKILFGERWLAVNPIVTERDHMMLTRKRGTEDSMHNVSQTFGSTSNRNSVLLAYERKKMVIGTEDPNAEPEYIVEAAIFDIDSWYYKRVPGRVSTDGTVLKQCAFLSTIKSNIRSEDVNDIGILTNEATDVSSFSSMVSDADQLFYPSALSFERVFVAKNTRIDWMKIQNIQDTILNKCAVKLPALIRNPEMISSVVMAAGLVRKNILSGSPNSSAAEINELQLSSDQKVLLNVIVYYGKIEEFCQLASRPDISDTLKRELAEWALHEAVDYKRTISDKMVSLFQGRSLALSPLAEESIAQGIKLFRVVYEYLKACSKALKDDRLRNLAHSVICMRNHTKLTSQFINFAIIPVDPIRQQRMKDLHSKRKNMARKNSSSLPVQSVVRKMNRQAPNAQFWNDIPHDEWYPPTPLDLLECLLNVSISESIKRELVVQYVIDWISTSPEDSEHSEKQLALETIKIMTNQMLNVNLEKIYYILDQGKKALTSSKTSDDMRALGEKVFSMKDDEISYEKLWGKDAPMTVTIGKHDLQRFEQRMKMQMEGGKVRLPVLDPESEILYQMFLFENEKFEAMSSEAISSNKLLSAFLPGMIKKDGRGRQKTAKEQEIEISVKKMFERKVQNDDEDMPEVFASVNDKTERKRKSSQFGEDDESSVSSSQYVPPTAKRIQQWKSAVESVANNSSINSITSPDSHQNAEINMMIATPARYYKRHNEEENVQDGFLSPAGNRPPPVSAHNSILKTAKGGQSASRGRIRFRADVPRGADESIEDNGRKGLALNFAILEDEEEETMTIRKSRSMGKHDEEKDSEKNVVDEMEEVKDQEQENDECIESEKTFENQDDFEVLEDTSAPEAANTENGSETPPMEDTFEVRDDDVMPPTDETYLSHLQTDKTGILEEEGEDEDIWDGVQRSFEVQMDEDCEAVPTIDVADDLESKSEEVNEEEVVESEEVQQDAKEPEKTEKRQEEPEPEVMQPVIPEEPQNESLESSIKLQEELQEEPDIVPTGDEDTADKVQEQAVEEDRPPSRNTRSSSVQKSTSQVEDRDPKELVEEERPPSRNTRSASVQKSSNQEKTSESGEVTEEDRPPSRNTRSASVQKSSSKVKDQKPEELIEEDRPPSRNTRSASAQKTVAANKSVLESEIPSRSASRRTRSTSLRNDTVAEPDETSVAMTTRRRTRATSEVVSKQSSEDDGRSTPKTGRTPTKKAAASTSSSRAGSVTRGKKSIIQKMPSPLEVTMEVQEEEEEEAEEERPASRSTRSASVKNTTVDPSSSALASTKRTTSRKRGNSETIDFNQDDKSAPTTPKRGRPAKKDAGSPKVGSKARGTKPKSIFENQEDEEDRSSSPDIEQPATPTRSSKRTARSRANSESIDDDSKQKTPKKKNAAVNEAGTSKQSRSVTRSRASSIDVQQEVEEPTTPKRGRGRPPKTVLENIEEGEEERKETAATPLLRSARRAKQ.

The interval M1–V956 is required for nuclear envelope and kinetochore localization. The interval G566–E778 is required for association with mitotic chromosomes. The important for nuclear localization stretch occupies residues A846–G1071. Disordered regions lie at residues K945–I994 and E1115–Q1784. A compositionally biased stretch (basic and acidic residues) spans G1126–E1149. Acidic residues-rich tracts occupy residues L1222 to W1232 and V1266 to Q1278. A chromatin binding region spans residues F1239–L1601. Basic and acidic residues predominate over residues Q1279–E1293. Residues E1297 to E1306 are compositionally biased toward low complexity. Over residues E1321–T1336 the composition is skewed to acidic residues. The span at A1337–P1351 shows a compositional bias: basic and acidic residues. Polar residues predominate over residues S1352 to Q1366. The segment covering V1367 to P1382 has biased composition (basic and acidic residues). Over residues S1383–E1398 the composition is skewed to polar residues. Positions K1428 to P1444 are enriched in basic and acidic residues. Over residues S1445 to A1459 the composition is skewed to polar residues. Over residues A1533–T1546 the composition is skewed to low complexity. The span at V1566–E1576 shows a compositional bias: acidic residues. A compositionally biased stretch (polar residues) spans S1581–R1606. The segment at L1601 to Q1784 is important for nuclear localization. Residues T1630–G1642 constitute a DNA-binding region (a.T hook 1). The interval T1630–Q1784 is required for chromosome segregation, nuclear growth, nucleoplasmic accumulation and cell cycle timing, but not required for nuclear envelope and kinetochore localization. Polar residues predominate over residues A1716–V1735. The segment at residues K1746–E1758 is a DNA-binding region (a.T hook 2).

As to expression, ubiquitously expressed (at protein level).

Its subcellular location is the nucleus. The protein resides in the nucleoplasm. It is found in the nucleus envelope. The protein localises to the nucleus inner membrane. It localises to the nuclear pore complex. Its subcellular location is the chromosome. The protein resides in the centromere. It is found in the kinetochore. Its function is as follows. Nuclear envelope protein which has essential roles in assembly of nuclear pore complexes and in chromatin maintenance during the cell cycle. Appears to be a stable structural component of the nuclear envelope during interphase. In dividing cells, localizes to kinetochores during early stages of mitosis and then to chromatin during late mitosis. Important for several mitotic processes including chromosome condensation, kinetochore assembly, chromosome segregation and cell-cycle timing. In postmitotic cells, plays a role in the early steps of nuclear pore complex assembly by recruiting the nucleoporins npp-10 and npp-5 to chromatin. Also involved in meiotic chromosome segregation. May function downstream of the Ran GTPase signaling pathway. The protein is Protein mel-28 of Caenorhabditis elegans.